Consider the following 361-residue polypeptide: MKFGWIMSSSSDIEERKDTVKDSLESSIPAIIVKKDEISTVRELGSIEIISDSLDADIVLVTKKDDLDILKSAKDSGKKTCVYITIETKEDEIYATKVSRLDFVDYIILEGKDWTIIPLENIIADLFNEDIKIVSLVNNVNDAKAAYEILEKGVDGVVLVPKDINEVKEFSKLIDSMNFENVALDYAVIKKIEPVGSGDRVCIDTCSIMEIGEGMLIGSYSRGMFLVHSESVENPYVATRPFRVNAGPVHAYILCPENKTKYLSDLKAGDKVLIVNKDGKTRETVIGRIKIEKRPLFLVEAEYNGEILRTILQNAETIRLVSDEGKPISVVDLKEGLKVLIKPDENARHFGMAINESIIEK.

It belongs to the archaeal-type DHQ synthase family.

It catalyses the reaction 2-amino-2,3,7-trideoxy-D-lyxo-hept-6-ulosonate + NAD(+) + H2O = 3-dehydroquinate + NH4(+) + NADH + H(+). Catalyzes the oxidative deamination and cyclization of 2-amino-3,7-dideoxy-D-threo-hept-6-ulosonic acid (ADH) to yield 3-dehydroquinate (DHQ), which is fed into the canonical shikimic pathway of aromatic amino acid biosynthesis. This Methanococcus vannielii (strain ATCC 35089 / DSM 1224 / JCM 13029 / OCM 148 / SB) protein is 3-dehydroquinate synthase.